Reading from the N-terminus, the 360-residue chain is DNA primase large subunit PriL (360 aa).

[4Fe-4S] cluster-binding residues include Cys-237, Cys-309, Cys-318, and Cys-325. The interval Asp-340–Asp-360 is disordered.

This sequence belongs to the eukaryotic-type primase large subunit family. In terms of assembly, heterodimer of a small subunit (PriS) and a large subunit (PriL). [4Fe-4S] cluster is required as a cofactor.

Regulatory subunit of DNA primase, an RNA polymerase that catalyzes the synthesis of short RNA molecules used as primers for DNA polymerase during DNA replication. Stabilizes and modulates the activity of the small subunit, increasing the rate of DNA synthesis, and conferring RNA synthesis capability. The DNA polymerase activity may enable DNA primase to also catalyze primer extension after primer synthesis. May also play a role in DNA repair. This is DNA primase large subunit PriL from Halobacterium salinarum (strain ATCC 29341 / DSM 671 / R1).